Reading from the N-terminus, the 988-residue chain is Echinoderm microtubule-associated protein-like 4 (988 aa).

The residue at position 1 (Met-1) is an N-acetylmethionine. Residues 1 to 260 (MDGFAGSLDD…IPSDVDNYDD (260 aa)) are microtubule-binding. Ser-7, Ser-13, Ser-16, Ser-61, and Ser-79 each carry phosphoserine. Residues 14–63 (AASTSDVQDRLSALESRVQQQEDEITVLKAALADVLRRLAISEDHVASVK) adopt a coiled-coil conformation. Thr-96 is subject to Phosphothreonine. The tract at residues 106 to 194 (TLSSAAKSGT…WENSDDSRNK (89 aa)) is disordered. Residues 114–134 (GTEKKKEKPQGQREKKEDSHS) show a composition bias toward basic and acidic residues. The residue at position 134 (Ser-134) is a Phosphoserine; by NEK7. The segment covering 137-155 (QSPQIRASPSPQPSSQPLQ) has biased composition (low complexity). Ser-144 is modified (phosphoserine; by NEK6). Ser-146 is subject to Phosphoserine; by NEK7. Residues 156–168 (INRQTPESKSSAP) are compositionally biased toward polar residues. Ser-171 carries the post-translational modification Phosphoserine. The segment covering 176–193 (PTAEKSHNSWENSDDSRN) has biased composition (basic and acidic residues). Residue Ser-200 is modified to Phosphoserine. Residue Thr-201 is modified to Phosphothreonine. Tyr-237 is subject to Phosphotyrosine. Thr-248 carries the post-translational modification Phosphothreonine. WD repeat units lie at residues 270-308 (LKLEWVYGYRGKDCRANVYLLPTGEIVYFIASVVVLFNY), 312-359 (TQRH…VWDS), 367-407 (VIGL…VWDW), 414-449 (AEIKTTNEVVLAVEFHPTDANTIITCGKSHIFFWTW), 456-495 (RKQGIFGKYEKPKFVQCLAFLGNGDVLTGDSGGVMLIWSK), 511-549 (QINRQIKAHDGSVFTLCQMRNGMLLTGGGKDRKIILWDH), 554-590 (EREIEVPDQYGTIRAVAEGRAEQFLVGTSRNFILRGT), 593-632 (DGFQIEVQGHRDELWGLATHPFKDLLLTCAQDRQVCMWNS), 636-673 (RLEWTRLVDEPGHCADFHPSGTVVAIGTHSGRWFVLDA), 679-715 (VSIHTDGNEQLSVMRYSVDGTLLAVGSHDNFIYLYTV), 722-761 (YSRYGKCTGHSSYITHLDWSPDNKHIMSNSGDYEILYWDI), 771-829 (RSDC…LFQY), and 836-875 (APSHKYSAHSSHVTNVSFTHNDSHLISTGGKDMSIIQWKL). Position 620 is a phosphothreonine; by NEK6 and NEK7 (Thr-620). The segment at 887-988 (ITDASVTKTP…EEERGITPLC (102 aa)) is disordered. Residues 890–904 (ASVTKTPASSSETAR) show a composition bias toward polar residues. Residues Ser-906, Ser-908, and Ser-914 each carry the phosphoserine modification. The span at 927–939 (MGSSPTLVENSLE) shows a compositional bias: polar residues. A compositionally biased stretch (acidic residues) spans 944 to 953 (PSEEQSEWGS).

Belongs to the WD repeat EMAP family. As to quaternary structure, homotrimer; self-association is mediated by the N-terminal coiled coil. Interacts (via WD repeats) with NUDC. Interacts with alpha- and beta-tubulin during mitosis. In terms of processing, phosphorylated during mitosis. Phosphorylation at Ser-144 and Ser-146 promotes its dissociation from microtubules during mitosis which is required for efficient chromosome congression.

It localises to the cytoplasm. Its subcellular location is the cytoskeleton. It is found in the spindle. The protein localises to the microtubule organizing center. The protein resides in the midbody. In terms of biological role, essential for the stability of microtubules (MTs). Essential for the formation of MTs. Required for the organization of the mitotic spindle and for the proper attachment of kinetochores to MTs. Promotes the recruitment of NUDC to the mitotic spindle for mitotic progression. In Mus musculus (Mouse), this protein is Echinoderm microtubule-associated protein-like 4 (Eml4).